The primary structure comprises 672 residues: Transcription factor tau 91 kDa subunit (672 aa).

The required for DNA-binding stretch occupies residues methionine 1–arginine 158. A DNA-binding region (a.T hook) is located at residues alanine 6–alanine 18. 2 disordered regions span residues serine 24 to lysine 45 and valine 67 to proline 156. The span at aspartate 71–leucine 100 shows a compositional bias: acidic residues. Residues leucine 159 to serine 672 form a sufficient for interaction with TFC8 region. The cysteines at positions 375 and 383 are disulfide-linked.

As to quaternary structure, heterodimer with TFC8. Component of the TFIIIC complex composed of TFC1, TFC3, TFC4, TFC6, TFC7 and TFC8. The subunits are organized in two globular domains, tauA and tauB, connected by a proteolysis-sensitive and flexible linker. Interacts with TFC1, TFC3, TFC4 and directly with TFC8.

It localises to the nucleus. In terms of biological role, TFIIIC mediates tRNA and 5S RNA gene activation by binding to intragenic promoter elements. Upstream of the transcription start site, TFIIIC assembles the initiation complex TFIIIB-TFIIIC-tDNA, which is sufficient for RNA polymerase III recruitment and function. Part of the tauB domain of TFIIIC that binds boxB DNA promoter sites of tRNA and similar genes. Cooperates with TFC3 in DNA binding. This chain is Transcription factor tau 91 kDa subunit (TFC6), found in Saccharomyces cerevisiae (strain ATCC 204508 / S288c) (Baker's yeast).